The following is a 281-amino-acid chain: Energy-coupling factor transporter ATP-binding protein EcfA1 (281 aa).

Positions 6–245 (IKSEDLVFKY…VEKIKSIGLD (240 aa)) constitute an ABC transporter domain. 44-51 (GHNGSGKS) contacts ATP.

This sequence belongs to the ABC transporter superfamily. Energy-coupling factor EcfA family. In terms of assembly, forms a stable energy-coupling factor (ECF) transporter complex composed of 2 membrane-embedded substrate-binding proteins (S component), 2 ATP-binding proteins (A component) and 2 transmembrane proteins (T component).

The protein localises to the cell membrane. ATP-binding (A) component of a common energy-coupling factor (ECF) ABC-transporter complex. Unlike classic ABC transporters this ECF transporter provides the energy necessary to transport a number of different substrates. In Clostridium perfringens (strain ATCC 13124 / DSM 756 / JCM 1290 / NCIMB 6125 / NCTC 8237 / Type A), this protein is Energy-coupling factor transporter ATP-binding protein EcfA1.